A 494-amino-acid chain; its full sequence is Ubiquinol-cytochrome-c reductase complex core protein I, mitochondrial (494 aa).

Histidine 70 serves as a coordination point for Zn(2+). Glutamate 73 acts as the Proton acceptor in catalysis. Residues histidine 74 and glutamate 150 each coordinate Zn(2+).

The protein belongs to the peptidase M16 family. UQCRC1/QCR1 subfamily. In terms of assembly, component of the ubiquinol-cytochrome c oxidoreductase (cytochrome b-c1 complex, complex III, CIII), a multisubunit enzyme composed of 10 subunits. The complex is composed of 3 respiratory subunits cytochrome b, cytochrome c1 and Rieske protein, 2 core protein subunits, and additional low-molecular weight protein subunits. The complex exists as an obligatory dimer and forms supercomplexes (SCs) in the inner mitochondrial membrane with cytochrome c oxidase (complex IV, CIV). Zn(2+) is required as a cofactor. In terms of processing, the N-terminus is blocked.

The protein localises to the mitochondrion inner membrane. Functionally, component of the ubiquinol-cytochrome c oxidoreductase, a multisubunit transmembrane complex that is part of the mitochondrial electron transport chain which drives oxidative phosphorylation. The respiratory chain contains 3 multisubunit complexes succinate dehydrogenase (complex II, CII), ubiquinol-cytochrome c oxidoreductase (cytochrome b-c1 complex, complex III, CIII) and cytochrome c oxidase (complex IV, CIV), that cooperate to transfer electrons derived from NADH and succinate to molecular oxygen, creating an electrochemical gradient over the inner membrane that drives transmembrane transport and the ATP synthase. The cytochrome b-c1 complex catalyzes electron transfer from ubiquinol to cytochrome c, linking this redox reaction to translocation of protons across the mitochondrial inner membrane, with protons being carried across the membrane as hydrogens on the quinol. In the process called Q cycle, 2 protons are consumed from the matrix, 4 protons are released into the intermembrane space and 2 electrons are passed to cytochrome c. The polypeptide is Ubiquinol-cytochrome-c reductase complex core protein I, mitochondrial (Euglena gracilis).